The following is a 153-amino-acid chain: 6,7-dimethyl-8-ribityllumazine synthase (153 aa).

5-amino-6-(D-ribitylamino)uracil-binding positions include Phe22, 56-58 (AFE), and 80-82 (TVI). 85 to 86 (ST) serves as a coordination point for (2S)-2-hydroxy-3-oxobutyl phosphate. The active-site Proton donor is the His88. Phe113 is a binding site for 5-amino-6-(D-ribitylamino)uracil. (2S)-2-hydroxy-3-oxobutyl phosphate is bound at residue Arg127.

Belongs to the DMRL synthase family. Forms an icosahedral capsid composed of 60 subunits, arranged as a dodecamer of pentamers.

It carries out the reaction (2S)-2-hydroxy-3-oxobutyl phosphate + 5-amino-6-(D-ribitylamino)uracil = 6,7-dimethyl-8-(1-D-ribityl)lumazine + phosphate + 2 H2O + H(+). The protein operates within cofactor biosynthesis; riboflavin biosynthesis; riboflavin from 2-hydroxy-3-oxobutyl phosphate and 5-amino-6-(D-ribitylamino)uracil: step 1/2. Functionally, catalyzes the formation of 6,7-dimethyl-8-ribityllumazine by condensation of 5-amino-6-(D-ribitylamino)uracil with 3,4-dihydroxy-2-butanone 4-phosphate. This is the penultimate step in the biosynthesis of riboflavin. The protein is 6,7-dimethyl-8-ribityllumazine synthase of Actinobacillus pleuropneumoniae serotype 7 (strain AP76).